The chain runs to 91 residues: Small ubiquitin-related modifier (91 aa).

The region spanning 13 to 91 (EYIKIKVVGQ…EVYQEQLGGF (79 aa)) is the Ubiquitin-like domain. Glycine 90 is covalently cross-linked (Glycyl lysine isopeptide (Gly-Lys) (interchain with K-? in acceptor proteins)). Residue phenylalanine 91 is a propeptide.

It belongs to the ubiquitin family. SUMO subfamily. In terms of assembly, covalently attached to tbx-2. Covalently attached to lin-1. Covalently attached to lin-11. Covalently attached to sop-2. Covalently attached to bet-1. In terms of processing, cleavage of precursor form by ulp-1 is necessary for function.

Its subcellular location is the cytoplasm. The protein resides in the nucleus. The protein localises to the cytoskeleton. It localises to the spindle. It is found in the chromosome. Its subcellular location is the microtubule organizing center. The protein resides in the centrosome. Functionally, ubiquitin-like protein which can be covalently attached to target lysines as a monomer. Does not seem to be involved in protein degradation and may function as an antagonist of ubiquitin in the degradation process. Plays a role in a number of cellular processes such as nuclear transport, DNA replication and repair, mitosis and signal transduction. Covalent attachment to its substrates requires prior activation by the E1 complex aos-1-uba-2 and linkage to the E2 enzyme ubc-9, and can be promoted by an E3 ligase such as gei-17. Required for embryonic development, fertility, vulval morphogenesis and inhibition of vulval cell fates. Probably by sumoylating bet-1, prevents muscle myosin depletion in aging adults probably by preventing myoblast growth factor receptor egl-15 overexpression. Plays a role in the attenuation of the let-60/ras pathway. Plays a role in male tail tip morphogenesis. Plays a role in the mitochondrial stress response with its covalent attachment to transcription factors dve-1 and afts-1 negatively regulating the mitochondrial unfolded protein response. In Caenorhabditis elegans, this protein is Small ubiquitin-related modifier.